The chain runs to 122 residues: Large ribosomal subunit protein uL14 (122 aa).

This sequence belongs to the universal ribosomal protein uL14 family. Part of the 50S ribosomal subunit. Forms a cluster with proteins L3 and L19. In the 70S ribosome, L14 and L19 interact and together make contacts with the 16S rRNA in bridges B5 and B8.

Binds to 23S rRNA. Forms part of two intersubunit bridges in the 70S ribosome. This chain is Large ribosomal subunit protein uL14, found in Nitratidesulfovibrio vulgaris (strain ATCC 29579 / DSM 644 / CCUG 34227 / NCIMB 8303 / VKM B-1760 / Hildenborough) (Desulfovibrio vulgaris).